Here is a 326-residue protein sequence, read N- to C-terminus: GTP 3',8-cyclase (326 aa).

Residues 5-227 (GHGRTVDYLR…ALGREGASPS (223 aa)) form the Radical SAM core domain. Position 14 (Arg14) interacts with GTP. [4Fe-4S] cluster is bound by residues Cys21 and Cys25. Tyr27 contacts S-adenosyl-L-methionine. Cys28 lines the [4Fe-4S] cluster pocket. A GTP-binding site is contributed by Arg64. Residue Gly68 participates in S-adenosyl-L-methionine binding. Thr95 is a GTP binding site. Ser119 provides a ligand contact to S-adenosyl-L-methionine. Lys155 provides a ligand contact to GTP. Residue Met189 participates in S-adenosyl-L-methionine binding. 2 residues coordinate [4Fe-4S] cluster: Cys250 and Cys253. 255–257 (RIR) is a binding site for GTP. Position 267 (Cys267) interacts with [4Fe-4S] cluster.

Belongs to the radical SAM superfamily. MoaA family. Monomer and homodimer. [4Fe-4S] cluster serves as cofactor.

It carries out the reaction GTP + AH2 + S-adenosyl-L-methionine = (8S)-3',8-cyclo-7,8-dihydroguanosine 5'-triphosphate + 5'-deoxyadenosine + L-methionine + A + H(+). It participates in cofactor biosynthesis; molybdopterin biosynthesis. Its function is as follows. Catalyzes the cyclization of GTP to (8S)-3',8-cyclo-7,8-dihydroguanosine 5'-triphosphate. In Sulfurovum sp. (strain NBC37-1), this protein is GTP 3',8-cyclase.